We begin with the raw amino-acid sequence, 657 residues long: Histidine ammonia-lyase (657 aa).

Residues 253–255 (ASG) constitute a cross-link (5-imidazolinone (Ala-Gly)). Serine 254 carries the post-translational modification 2,3-didehydroalanine (Ser). Position 396 is a phosphothreonine (threonine 396). Serine 635 carries the post-translational modification Phosphoserine. Threonine 637 bears the Phosphothreonine mark. Residue serine 648 is modified to Phosphoserine.

It belongs to the PAL/histidase family. In terms of processing, contains an active site 4-methylidene-imidazol-5-one (MIO), which is formed autocatalytically by cyclization and dehydration of residues Ala-Ser-Gly.

It catalyses the reaction L-histidine = trans-urocanate + NH4(+). Its pathway is amino-acid degradation; L-histidine degradation into L-glutamate; N-formimidoyl-L-glutamate from L-histidine: step 1/3. The protein is Histidine ammonia-lyase (HAL) of Homo sapiens (Human).